We begin with the raw amino-acid sequence, 336 residues long: Ribosomal RNA large subunit methyltransferase F (336 aa).

This sequence belongs to the methyltransferase superfamily. METTL16/RlmF family.

It localises to the cytoplasm. It carries out the reaction adenosine(1618) in 23S rRNA + S-adenosyl-L-methionine = N(6)-methyladenosine(1618) in 23S rRNA + S-adenosyl-L-homocysteine + H(+). Its function is as follows. Specifically methylates the adenine in position 1618 of 23S rRNA. This chain is Ribosomal RNA large subunit methyltransferase F, found in Serratia proteamaculans (strain 568).